Here is a 234-residue protein sequence, read N- to C-terminus: Ribosomal RNA small subunit methyltransferase G (234 aa).

S-adenosyl-L-methionine-binding positions include G74, F79, 125–126 (AE), and R144.

This sequence belongs to the methyltransferase superfamily. RNA methyltransferase RsmG family.

It is found in the cytoplasm. In terms of biological role, specifically methylates the N7 position of a guanine in 16S rRNA. This Roseiflexus sp. (strain RS-1) protein is Ribosomal RNA small subunit methyltransferase G.